Here is a 379-residue protein sequence, read N- to C-terminus: Chaperone protein DnaJ (379 aa).

A J domain is found at 5 to 70 (DYYEVLGVSR…QKRAAYDQYG (66 aa)). A CR-type zinc finger spans residues 134 to 212 (GVTKEIRIPT…CHGHGRVEKS (79 aa)). Residues cysteine 147, cysteine 150, cysteine 164, cysteine 167, cysteine 186, cysteine 189, cysteine 200, and cysteine 203 each coordinate Zn(2+). CXXCXGXG motif repeat units lie at residues 147 to 154 (CDVCHGSG), 164 to 171 (CPTCHGAG), 186 to 193 (CPHCHGRG), and 200 to 207 (CNKCHGHG).

The protein belongs to the DnaJ family. In terms of assembly, homodimer. It depends on Zn(2+) as a cofactor.

The protein localises to the cytoplasm. Its function is as follows. Participates actively in the response to hyperosmotic and heat shock by preventing the aggregation of stress-denatured proteins and by disaggregating proteins, also in an autonomous, DnaK-independent fashion. Unfolded proteins bind initially to DnaJ; upon interaction with the DnaJ-bound protein, DnaK hydrolyzes its bound ATP, resulting in the formation of a stable complex. GrpE releases ADP from DnaK; ATP binding to DnaK triggers the release of the substrate protein, thus completing the reaction cycle. Several rounds of ATP-dependent interactions between DnaJ, DnaK and GrpE are required for fully efficient folding. Also involved, together with DnaK and GrpE, in the DNA replication of plasmids through activation of initiation proteins. This is Chaperone protein DnaJ from Yersinia pestis bv. Antiqua (strain Antiqua).